The sequence spans 394 residues: Phosphoglycerate kinase (394 aa).

Substrate-binding positions include 21–23 (DLN), R36, 60–63 (HLGN), R114, and R147. ATP is bound by residues K198, E315, and 341-344 (GGET).

Belongs to the phosphoglycerate kinase family. In terms of assembly, monomer.

Its subcellular location is the cytoplasm. It carries out the reaction (2R)-3-phosphoglycerate + ATP = (2R)-3-phospho-glyceroyl phosphate + ADP. Its pathway is carbohydrate degradation; glycolysis; pyruvate from D-glyceraldehyde 3-phosphate: step 2/5. This Wigglesworthia glossinidia brevipalpis protein is Phosphoglycerate kinase.